A 237-amino-acid polypeptide reads, in one-letter code: UPF0280 protein Mthe_1297 (237 aa).

This sequence belongs to the UPF0280 family.

This Methanothrix thermoacetophila (strain DSM 6194 / JCM 14653 / NBRC 101360 / PT) (Methanosaeta thermophila) protein is UPF0280 protein Mthe_1297.